Consider the following 145-residue polypeptide: UPF0179 protein MmarC6_0993 (145 aa).

Belongs to the UPF0179 family.

In Methanococcus maripaludis (strain C6 / ATCC BAA-1332), this protein is UPF0179 protein MmarC6_0993.